A 360-amino-acid chain; its full sequence is Photosystem II protein D1 (360 aa).

A run of 3 helical transmembrane segments spans residues 29 to 46, 118 to 133, and 142 to 156; these read YIGW…TATT, HFLL…EWEF, and WISV…AASA. A chlorophyll a-binding site is contributed by histidine 118. Pheophytin a is bound at residue tryptophan 126. 2 residues coordinate [CaMn4O5] cluster: aspartate 170 and glutamate 189. A helical membrane pass occupies residues 197–218; the sequence is FHQLGVAGVFGGSLFSAMHGSL. Histidine 198 serves as a coordination point for chlorophyll a. A quinone-binding positions include histidine 215 and 264-265; that span reads SF. Histidine 215 provides a ligand contact to Fe cation. Position 272 (histidine 272) interacts with Fe cation. The helical transmembrane segment at 274 to 288 threads the bilayer; it reads FLGLWPVVGIWFTAL. Residues histidine 332, glutamate 333, aspartate 342, and alanine 344 each coordinate [CaMn4O5] cluster. Residues 345–360 constitute a propeptide that is removed on maturation; that stretch reads SGESLPVALTAPAVIG.

Belongs to the reaction center PufL/M/PsbA/D family. In terms of assembly, PSII is composed of 1 copy each of membrane proteins PsbA, PsbB, PsbC, PsbD, PsbE, PsbF, PsbH, PsbI, PsbJ, PsbK, PsbL, PsbM, PsbT, PsbX, PsbY, PsbZ, Psb30/Ycf12, at least 3 peripheral proteins of the oxygen-evolving complex and a large number of cofactors. It forms dimeric complexes. The cofactor is The D1/D2 heterodimer binds P680, chlorophylls that are the primary electron donor of PSII, and subsequent electron acceptors. It shares a non-heme iron and each subunit binds pheophytin, quinone, additional chlorophylls, carotenoids and lipids. D1 provides most of the ligands for the Mn4-Ca-O5 cluster of the oxygen-evolving complex (OEC). There is also a Cl(-1) ion associated with D1 and D2, which is required for oxygen evolution. The PSII complex binds additional chlorophylls, carotenoids and specific lipids.. Tyr-161 forms a radical intermediate that is referred to as redox-active TyrZ, YZ or Y-Z. Post-translationally, C-terminally processed by CTPA; processing is essential to allow assembly of the oxygen-evolving complex and thus photosynthetic growth.

The protein resides in the plastid. The protein localises to the chloroplast thylakoid membrane. The catalysed reaction is 2 a plastoquinone + 4 hnu + 2 H2O = 2 a plastoquinol + O2. In terms of biological role, photosystem II (PSII) is a light-driven water:plastoquinone oxidoreductase that uses light energy to abstract electrons from H(2)O, generating O(2) and a proton gradient subsequently used for ATP formation. It consists of a core antenna complex that captures photons, and an electron transfer chain that converts photonic excitation into a charge separation. The D1/D2 (PsbA/PsbD) reaction center heterodimer binds P680, the primary electron donor of PSII as well as several subsequent electron acceptors. This is Photosystem II protein D1 from Guillardia theta (Cryptophyte).